Here is a 117-residue protein sequence, read N- to C-terminus: Large ribosomal subunit protein uL18 (117 aa).

The protein belongs to the universal ribosomal protein uL18 family. As to quaternary structure, part of the 50S ribosomal subunit; part of the 5S rRNA/L5/L18/L25 subcomplex. Contacts the 5S and 23S rRNAs.

Functionally, this is one of the proteins that bind and probably mediate the attachment of the 5S RNA into the large ribosomal subunit, where it forms part of the central protuberance. The polypeptide is Large ribosomal subunit protein uL18 (Alkalilimnicola ehrlichii (strain ATCC BAA-1101 / DSM 17681 / MLHE-1)).